We begin with the raw amino-acid sequence, 192 residues long: Phosphoheptose isomerase (192 aa).

Residues 35 to 192 (LIETLENQGK…CIERHFAHKN (158 aa)) enclose the SIS domain. 50–52 (NGG) contributes to the substrate binding site. The Zn(2+) site is built by His59 and Glu63. Residues Glu63, 92–93 (ND), 118–120 (STS), Ser123, and Gln170 contribute to the substrate site. Gln170 and His178 together coordinate Zn(2+).

Belongs to the SIS family. GmhA subfamily. In terms of assembly, homotetramer. Zn(2+) is required as a cofactor.

It is found in the cytoplasm. The enzyme catalyses 2 D-sedoheptulose 7-phosphate = D-glycero-alpha-D-manno-heptose 7-phosphate + D-glycero-beta-D-manno-heptose 7-phosphate. Its pathway is carbohydrate biosynthesis; D-glycero-D-manno-heptose 7-phosphate biosynthesis; D-glycero-alpha-D-manno-heptose 7-phosphate and D-glycero-beta-D-manno-heptose 7-phosphate from sedoheptulose 7-phosphate: step 1/1. Its function is as follows. Catalyzes the isomerization of sedoheptulose 7-phosphate in D-glycero-D-manno-heptose 7-phosphate. The protein is Phosphoheptose isomerase of Helicobacter pylori (strain P12).